Consider the following 473-residue polypeptide: Hyaluronidase-2 (473 aa).

Residues 1–20 form the signal peptide; the sequence is MRAGLGPIITLALVLEVAWA. Disulfide bonds link Cys-47–Cys-340 and Cys-211–Cys-227. Asn-74 and Asn-103 each carry an N-linked (GlcNAc...) asparagine glycan. Glu-135 acts as the Proton donor in catalysis. Asn-357 carries an N-linked (GlcNAc...) asparagine glycan. The region spanning 361–439 is the EGF-like domain; the sequence is ATQYCSWTQC…YLGWGGEQCQ (79 aa). 3 cysteine pairs are disulfide-bonded: Cys-365–Cys-376, Cys-370–Cys-427, and Cys-429–Cys-438. A lipid anchor (GPI-anchor amidated aspartate) is attached at Asp-448. Positions 449-473 are cleaved as a propeptide — removed in mature form; that stretch reads ASRAWAGAHLASLLGLVAMTLTWTL.

This sequence belongs to the glycosyl hydrolase 56 family. As to quaternary structure, interacts with MST1R.

Its subcellular location is the cell membrane. The catalysed reaction is Random hydrolysis of (1-&gt;4)-linkages between N-acetyl-beta-D-glucosamine and D-glucuronate residues in hyaluronate.. Catalyzes hyaluronan degradation into small fragments that are endocytosed and degraded in lysosomes by HYAL1 and exoglycosidases. Essential for the breakdown of extracellular matrix hyaluronan. This is Hyaluronidase-2 (Hyal2) from Rattus norvegicus (Rat).